The chain runs to 446 residues: Cyclin-T1-1 (446 aa).

It belongs to the cyclin family. Cyclin T subfamily.

The sequence is that of Cyclin-T1-1 (CYCT1-1) from Oryza sativa subsp. japonica (Rice).